A 477-amino-acid polypeptide reads, in one-letter code: Aspartyl/glutamyl-tRNA(Asn/Gln) amidotransferase subunit B (477 aa).

The protein belongs to the GatB/GatE family. GatB subfamily. As to quaternary structure, heterotrimer of A, B and C subunits.

It catalyses the reaction L-glutamyl-tRNA(Gln) + L-glutamine + ATP + H2O = L-glutaminyl-tRNA(Gln) + L-glutamate + ADP + phosphate + H(+). The catalysed reaction is L-aspartyl-tRNA(Asn) + L-glutamine + ATP + H2O = L-asparaginyl-tRNA(Asn) + L-glutamate + ADP + phosphate + 2 H(+). Its function is as follows. Allows the formation of correctly charged Asn-tRNA(Asn) or Gln-tRNA(Gln) through the transamidation of misacylated Asp-tRNA(Asn) or Glu-tRNA(Gln) in organisms which lack either or both of asparaginyl-tRNA or glutaminyl-tRNA synthetases. The reaction takes place in the presence of glutamine and ATP through an activated phospho-Asp-tRNA(Asn) or phospho-Glu-tRNA(Gln). The protein is Aspartyl/glutamyl-tRNA(Asn/Gln) amidotransferase subunit B of Legionella pneumophila (strain Corby).